Consider the following 118-residue polypeptide: UPF0102 protein lpp3065 (118 aa).

This sequence belongs to the UPF0102 family.

The chain is UPF0102 protein lpp3065 from Legionella pneumophila (strain Paris).